Reading from the N-terminus, the 237-residue chain is N-(5'-phosphoribosyl)anthranilate isomerase (237 aa).

The protein belongs to the TrpF family.

The catalysed reaction is N-(5-phospho-beta-D-ribosyl)anthranilate = 1-(2-carboxyphenylamino)-1-deoxy-D-ribulose 5-phosphate. Its pathway is amino-acid biosynthesis; L-tryptophan biosynthesis; L-tryptophan from chorismate: step 3/5. This is N-(5'-phosphoribosyl)anthranilate isomerase from Desulfitobacterium hafniense (strain Y51).